A 344-amino-acid chain; its full sequence is Transcription factor HHO3 (344 aa).

2 disordered regions span residues 90–122 (KWSSASSDETDKDEEAEKTEMMTNENNDGDKKK) and 156–212 (AFQP…KQRR). Acidic residues predominate over residues 97–106 (DETDKDEEAE). Residues 178-188 (TPTSTTTTSST) are compositionally biased toward low complexity. In terms of domain architecture, HTH myb-type spans 206-266 (SNRKQRRCWS…HLQKYRLHTR (61 aa)). The segment at residues 237-262 (PKQIRDLMKVDGLTNDEVKSHLQKYR) is a DNA-binding region (H-T-H motif). The disordered stretch occupies residues 306–344 (PVATQPPQSSTSGERSNRGCKSPATSSTTTHTPHLLPLS). Residues 310-319 (QPPQSSTSGE) show a composition bias toward polar residues. Residues 330–344 (TSSTTTHTPHLLPLS) show a composition bias toward low complexity.

It is found in the nucleus. In terms of biological role, probable transcription factor involved in phosphate signaling in roots. The chain is Transcription factor HHO3 from Arabidopsis thaliana (Mouse-ear cress).